The following is a 302-amino-acid chain: Ribonuclease HII (302 aa).

The RNase H type-2 domain maps to 53-297 (EFEIGVDEVG…VQQAIEGTLA (245 aa)). A divalent metal cation is bound by residues aspartate 59, glutamate 60, and aspartate 163.

It belongs to the RNase HII family. Mn(2+) serves as cofactor. Requires Mg(2+) as cofactor.

The protein resides in the cytoplasm. It catalyses the reaction Endonucleolytic cleavage to 5'-phosphomonoester.. Endonuclease that specifically degrades the RNA of RNA-DNA hybrids. The polypeptide is Ribonuclease HII (Psychrobacter sp. (strain PRwf-1)).